The primary structure comprises 420 residues: Phospholipase A1-II 3 (420 aa).

The first 21 residues, 1–21, serve as a signal peptide directing secretion; that stretch reads MCCFLLVSVLLATTLTDVASA. An N-linked (GlcNAc...) asparagine glycan is attached at asparagine 231. Serine 240 serves as the catalytic Acyl-ester intermediate. The active-site Charge relay system is the serine 240. A glycan (N-linked (GlcNAc...) asparagine) is linked at asparagine 294. Residues aspartate 305 and histidine 343 each act as charge relay system in the active site. The stretch at 367–388 forms a coiled coil; it reads VVDRDLALVNKEVDALRDEYQV. A glycan (N-linked (GlcNAc...) asparagine) is linked at asparagine 403.

It belongs to the AB hydrolase superfamily. Lipase family.

It is found in the secreted. Its function is as follows. Acylhydrolase that catalyzes the hydrolysis of phospholipids at the sn-1 position. This Oryza sativa subsp. japonica (Rice) protein is Phospholipase A1-II 3.